A 216-amino-acid chain; its full sequence is Adenylate kinase (216 aa).

Residue 10-15 (GAGKGT) coordinates ATP. An NMP region spans residues 30–59 (STGDMIRETIKSDSEIGKELKKVLDAGQLV). Residues Thr-31, Arg-36, 57–59 (QLV), and Gln-92 contribute to the AMP site. The LID stretch occupies residues 122-159 (GRRVHPASGRTYHTKFNPPKVEGKDDITGEDLITRTDD). ATP is bound by residues Arg-123 and 132-133 (TY). Residues Arg-156 and Arg-167 each coordinate AMP. Gln-202 contributes to the ATP binding site.

The protein belongs to the adenylate kinase family. Monomer.

The protein resides in the cytoplasm. It carries out the reaction AMP + ATP = 2 ADP. It functions in the pathway purine metabolism; AMP biosynthesis via salvage pathway; AMP from ADP: step 1/1. In terms of biological role, catalyzes the reversible transfer of the terminal phosphate group between ATP and AMP. Plays an important role in cellular energy homeostasis and in adenine nucleotide metabolism. This is Adenylate kinase from Francisella philomiragia subsp. philomiragia (strain ATCC 25017 / CCUG 19701 / FSC 153 / O#319-036).